The primary structure comprises 302 residues: 33 kDa chaperonin (302 aa).

2 disulfides stabilise this stretch: Cys247/Cys249 and Cys280/Cys283.

It belongs to the HSP33 family. In terms of processing, under oxidizing conditions two disulfide bonds are formed involving the reactive cysteines. Under reducing conditions zinc is bound to the reactive cysteines and the protein is inactive.

It is found in the cytoplasm. Redox regulated molecular chaperone. Protects both thermally unfolding and oxidatively damaged proteins from irreversible aggregation. Plays an important role in the bacterial defense system toward oxidative stress. The polypeptide is 33 kDa chaperonin (Prochlorococcus marinus (strain MIT 9301)).